Here is a 522-residue protein sequence, read N- to C-terminus: Signal transduction histidine-protein kinase/phosphatase MprB (522 aa).

At Met-1–Leu-30 the chain is on the cytoplasmic side. The helical transmembrane segment at Leu-31 to Ile-51 threads the bilayer. The Extracellular segment spans residues Ser-52–Arg-167. Residues Trp-168 to Val-188 traverse the membrane as a helical segment. The Cytoplasmic portion of the chain corresponds to Thr-189–Arg-522. Residues Arg-190–Glu-242 enclose the HAMP domain. The Histidine kinase domain maps to Asp-250–Pro-470. His-253 is subject to Phosphohistidine; by autocatalysis. Residues Gly-468–Arg-522 are disordered. Residues Thr-502 to Arg-522 are compositionally biased toward polar residues.

The cofactor is Mg(2+). Mn(2+) is required as a cofactor. In terms of processing, autophosphorylated.

The protein resides in the cell membrane. The enzyme catalyses ATP + protein L-histidine = ADP + protein N-phospho-L-histidine.. Functionally, member of the two-component regulatory system MprB/MprA which contributes to maintaining a balance among several systems involved in stress resistance and is required for establishment and maintenance of persistent infection in the host. In response to environmental signals MprB acts both as a membrane-associated protein kinase that undergoes autophosphorylation and subsequently transfers the phosphate to MprA, and a protein phosphatase that dephosphorylates phospho-MprA. This chain is Signal transduction histidine-protein kinase/phosphatase MprB (mprB), found in Mycobacterium avium (strain 104).